A 448-amino-acid chain; its full sequence is Asparagine--tRNA ligase (448 aa).

This sequence belongs to the class-II aminoacyl-tRNA synthetase family. As to quaternary structure, homodimer.

The protein localises to the cytoplasm. The enzyme catalyses tRNA(Asn) + L-asparagine + ATP = L-asparaginyl-tRNA(Asn) + AMP + diphosphate + H(+). The chain is Asparagine--tRNA ligase from Streptococcus mutans serotype c (strain ATCC 700610 / UA159).